The following is a 167-amino-acid chain: cAMP-dependent protein kinase type I-alpha regulatory subunit (167 aa).

Thr-12 carries the phosphothreonine modification. 2 positions are modified to phosphoserine: Ser-14 and Ser-20. Positions 30 to 33 match the Pseudophosphorylation motif motif; it reads RGAI. The residue at position 34 (Ser-34) is a Phosphoserine. Residues 51–78, 79–167, Glu-147, and Arg-156 contribute to the 3',5'-cyclic AMP site; these read LFSH…SKVS and ILES…ILKR. Ser-82 carries the phosphoserine modification.

It belongs to the cAMP-dependent kinase regulatory chain family. The inactive holoenzyme is composed of two regulatory chains and two catalytic chains. Activation by cAMP releases the two active catalytic monomers and the regulatory dimer. Interacts with PRKACA and PRKACB. PRKAR1A also interacts with RFC2; the complex may be involved in cell survival. Interacts with AKAP4. Interacts with RARA; the interaction occurs in the presence of cAMP or FSH and regulates RARA transcriptional activity. Interacts with the phosphorylated form of PJA2. Interacts with CBFA2T3. Interacts with PRKX; regulates this cAMP-dependent protein kinase. Interacts with smAKAP; this interaction may target PRKAR1A to the plasma membrane. Interacts with AICDA. Post-translationally, the pseudophosphorylation site binds to the substrate-binding region of the catalytic chain, resulting in the inhibition of its activity.

The protein localises to the cell membrane. Its function is as follows. Regulatory subunit of the cAMP-dependent protein kinases involved in cAMP signaling in cells. The chain is cAMP-dependent protein kinase type I-alpha regulatory subunit from Mesocricetus auratus (Golden hamster).